We begin with the raw amino-acid sequence, 253 residues long: Homeotic protein ultrabithorax (253 aa).

Positions 125-141 (GNTSNGSNAPNAANGQN) are enriched in low complexity. The disordered stretch occupies residues 125–193 (GNTSNGSNAP…GNGTAGGVPQ (69 aa)). Over residues 176 to 189 (RGGGSAGGGNGTAG) the composition is skewed to gly residues. The short motif at 237–242 (FYPWMA) is the Antp-type hexapeptide element.

It belongs to the Antp homeobox family.

Its subcellular location is the nucleus. Functionally, sequence-specific transcription factor which is part of a developmental regulatory system that provides cells with specific positional identities on the anterior-posterior axis. Binds the consensus region 5'-TTAAT[GT][GA]-3'. This homeotic protein controls development of the cells in the posterior thoracic and first abdominal segments. It activates the synthesis of the decapentaplegic (DPP) growth factor. This Drosophila funebris (Fruit fly) protein is Homeotic protein ultrabithorax (Ubx).